The sequence spans 399 residues: Protein shisa-8 (399 aa).

A signal peptide spans 1 to 36 (MERAGARGQRCGRRSHGLPLALRLALLLAGSPSGRA). The Extracellular portion of the chain corresponds to 37-136 (GAPEEQEIAG…APRDPARERS (100 aa)). Asn-73 carries N-linked (GlcNAc...) asparagine glycosylation. Residues 137–157 (HTAVYAVCGVAALLVLVGIGA) traverse the membrane as a helical segment. Residues 158–399 (RLGLERAHSP…STNSKAEVTV (242 aa)) are Cytoplasmic-facing. Disordered regions lie at residues 207 to 248 (GDGV…GGSL) and 378 to 399 (FYSSAGRGPRHLSTNSKAEVTV). Polar residues predominate over residues 389 to 399 (LSTNSKAEVTV).

The protein belongs to the shisa family. In terms of assembly, interacts with AMPAR subunits GRIA1 and GRIA2. As to expression, brain-specific. Highly expressed in cerebellum and olfactory bulb.

The protein localises to the membrane. Functionally, may regulate trafficking and current kinetics of AMPA-type glutamate receptor (AMPAR) at synapses. The chain is Protein shisa-8 from Mus musculus (Mouse).